A 719-amino-acid polypeptide reads, in one-letter code: Homeobox protein SIX5 (719 aa).

Composition is skewed to low complexity over residues 1–22 and 31–65; these read MATS…AAAT and QLLQ…GPGS. Disordered regions lie at residues 1 to 73 and 241 to 287; these read MATS…VTEV and WFKN…VASM. Residues 194-253 constitute a DNA-binding region (homeobox); the sequence is GEETVYCFKERSRAALKACYRGNRYPTPDEKRRLATLTGLSLTQVSNWFKNRRQRDRTGT. Residues 272-282 show a composition bias toward basic and acidic residues; the sequence is ESSRSPEDLER.

This sequence belongs to the SIX/Sine oculis homeobox family. Probably binds DNA dimer. Interacts with EYA3, and probably EYA1 and EYA2.

Its subcellular location is the nucleus. Transcription factor that is thought to be involved in regulation of organogenesis. May be involved in determination and maintenance of retina formation. Binds a 5'-GGTGTCAG-3' motif present in the ARE regulatory element of ATP1A1. Binds a 5'-TCA[AG][AG]TTNC-3' motif present in the MEF3 element in the myogenin promoter, and in the IGFBP5 promoter. Thought to be regulated by association with Dach and Eya proteins, and seems to be coactivated by EYA1, EYA2 and EYA3. This Mus musculus (Mouse) protein is Homeobox protein SIX5 (Six5).